The primary structure comprises 519 residues: Sensory neuron membrane protein 2 (519 aa).

Over 1–7 (MLAKHSK) the chain is Cytoplasmic. The helical transmembrane segment at 8–28 (LFFTGSVVFLIVAIVLASWGF) threads the bilayer. Residues 29 to 469 (PKIISTRIQK…DAHALLSYAQ (441 aa)) lie on the Extracellular side of the membrane. N-linked (GlcNAc...) asparagine glycans are attached at residues asparagine 44, asparagine 67, asparagine 104, asparagine 166, asparagine 229, asparagine 272, and asparagine 314. Disulfide bonds link cysteine 268-cysteine 338, cysteine 299-cysteine 362, and cysteine 340-cysteine 351. The chain crosses the membrane as a helical span at residues 470 to 490 (LARWIILAAAIILAIIATITV). Topologically, residues 491 to 519 (ARSTSLISWPRNSNSVNFIIGPMVNDKMR) are cytoplasmic.

This sequence belongs to the CD36 family. In terms of tissue distribution, localizes to both male and female antennae but not the leg, wing, gut, head or thoracic ganglia. Detected throughout the sensory epithelium, associating with both sex-pheromone sensilla and plant-volatile sensilla. Differentially expressed among different sensilla and different neurons within a given sensillum.

The protein resides in the cell membrane. Its function is as follows. Plays an olfactory role that is not restricted to pheromone sensitivity. The sequence is that of Sensory neuron membrane protein 2 from Manduca sexta (Tobacco hawkmoth).